Reading from the N-terminus, the 354-residue chain is ATP-dependent (S)-NAD(P)H-hydrate dehydratase (354 aa).

The YjeF C-terminal domain occupies alanine 42–isoleucine 350. (6S)-NADPHX contacts are provided by residues glycine 155 and asparagine 208 to arginine 214. ATP-binding positions include lysine 248 to aspartate 252 and glycine 267 to glycine 276. Aspartate 277 contributes to the (6S)-NADPHX binding site.

Belongs to the NnrD/CARKD family. Mg(2+) is required as a cofactor.

It carries out the reaction (6S)-NADHX + ATP = ADP + phosphate + NADH + H(+). It catalyses the reaction (6S)-NADPHX + ATP = ADP + phosphate + NADPH + H(+). Its function is as follows. Catalyzes the dehydration of the S-form of NAD(P)HX at the expense of ATP, which is converted to ADP. Together with NAD(P)HX epimerase, which catalyzes the epimerization of the S- and R-forms, the enzyme allows the repair of both epimers of NAD(P)HX, a damaged form of NAD(P)H that is a result of enzymatic or heat-dependent hydration. The sequence is that of ATP-dependent (S)-NAD(P)H-hydrate dehydratase from Vitis vinifera (Grape).